Consider the following 132-residue polypeptide: Small ribosomal subunit protein eS24 (132 aa).

Residues 90-100 are compositionally biased toward basic and acidic residues; sequence RLARHGLFEKK. The tract at residues 90–132 is disordered; that stretch reads RLARHGLFEKKKTSRKQRKERKNRMKKVRGTKKASVGASKKKD. Residues 101–121 are compositionally biased toward basic residues; sequence KTSRKQRKERKNRMKKVRGTK.

Belongs to the eukaryotic ribosomal protein eS24 family. In terms of assembly, component of the small ribosomal subunit.

Its subcellular location is the cytoplasm. In terms of biological role, component of the small ribosomal subunit. The ribosome is a large ribonucleoprotein complex responsible for the synthesis of proteins in the cell. Required for processing of pre-rRNA and maturation of 40S ribosomal subunits. This is Small ribosomal subunit protein eS24 (rps24) from Takifugu rubripes (Japanese pufferfish).